The primary structure comprises 404 residues: Cysteine desulfurase IscS (404 aa).

Residues Ala-75 to Thr-76, Asn-155, Gln-183, and Ser-203 to His-205 each bind pyridoxal 5'-phosphate. Lys-206 is modified (N6-(pyridoxal phosphate)lysine). Position 243 (Thr-243) interacts with pyridoxal 5'-phosphate. The active-site Cysteine persulfide intermediate is Cys-328. Cys-328 serves as a coordination point for [2Fe-2S] cluster.

The protein belongs to the class-V pyridoxal-phosphate-dependent aminotransferase family. NifS/IscS subfamily. As to quaternary structure, homodimer. Forms a heterotetramer with IscU, interacts with other sulfur acceptors. The cofactor is pyridoxal 5'-phosphate.

It is found in the cytoplasm. The enzyme catalyses (sulfur carrier)-H + L-cysteine = (sulfur carrier)-SH + L-alanine. It functions in the pathway cofactor biosynthesis; iron-sulfur cluster biosynthesis. Functionally, master enzyme that delivers sulfur to a number of partners involved in Fe-S cluster assembly, tRNA modification or cofactor biosynthesis. Catalyzes the removal of elemental sulfur atoms from cysteine to produce alanine. Functions as a sulfur delivery protein for Fe-S cluster synthesis onto IscU, an Fe-S scaffold assembly protein, as well as other S acceptor proteins. In Histophilus somni (strain 2336) (Haemophilus somnus), this protein is Cysteine desulfurase IscS.